The sequence spans 452 residues: Tylactone mycaminosyltransferase (452 aa).

Basic and acidic residues predominate over residues 1-16 (MRRALDDRRRGPHGPE). Positions 1-20 (MRRALDDRRRGPHGPEGKPP) are disordered.

This sequence belongs to the glycosyltransferase 28 family.

The catalysed reaction is tylactone + dTDP-alpha-D-mycaminose = 5-O-beta-D-mycaminosyltylactone + dTDP + H(+). It functions in the pathway antibiotic biosynthesis; tylosin biosynthesis. Its activity is regulated as follows. The activity of TylM2 is substantially increased by the addition of the accessory protein TylM3. Functionally, involved in the biosynthesis of the macrolide antibiotic tylosin derived from the polyketide lactone tylactone. Catalyzes the transfer of alpha-D-mycaminosyl from dTDP-alpha-D-mycaminose to the 5-hydroxyl group of tylactone to yield 5-O-mycaminosytylactone. It can also accept 16-membered tylactone and 12-membered ring macrolide. This is Tylactone mycaminosyltransferase from Streptomyces fradiae (Streptomyces roseoflavus).